A 386-amino-acid polypeptide reads, in one-letter code: Succinate--CoA ligase [ADP-forming] subunit beta (386 aa).

In terms of domain architecture, ATP-grasp spans 9–244; it reads KEILRNFGVP…LDEEDPAEVE (236 aa). ATP is bound by residues Lys46, 53–55, Glu99, Ala102, and Glu107; that span reads GRG. Mg(2+) is bound by residues Asn199 and Asp213. Residues Asn264 and 321 to 323 each bind substrate; that span reads GIM.

The protein belongs to the succinate/malate CoA ligase beta subunit family. Heterotetramer of two alpha and two beta subunits. Mg(2+) is required as a cofactor.

It carries out the reaction succinate + ATP + CoA = succinyl-CoA + ADP + phosphate. The enzyme catalyses GTP + succinate + CoA = succinyl-CoA + GDP + phosphate. Its pathway is carbohydrate metabolism; tricarboxylic acid cycle; succinate from succinyl-CoA (ligase route): step 1/1. In terms of biological role, succinyl-CoA synthetase functions in the citric acid cycle (TCA), coupling the hydrolysis of succinyl-CoA to the synthesis of either ATP or GTP and thus represents the only step of substrate-level phosphorylation in the TCA. The beta subunit provides nucleotide specificity of the enzyme and binds the substrate succinate, while the binding sites for coenzyme A and phosphate are found in the alpha subunit. The chain is Succinate--CoA ligase [ADP-forming] subunit beta from Polaromonas sp. (strain JS666 / ATCC BAA-500).